The chain runs to 202 residues: Coiled-coil domain-containing protein mdt-28 (202 aa).

Composition is skewed to acidic residues over residues 1 to 15 and 28 to 45; these read MFEE…EEQE and EDID…DDEY. The tract at residues 1-83 is disordered; it reads MFEELDAEDG…NEDDEEPIEP (83 aa). A coiled-coil region spans residues 159–184; it reads IEEENLDEAIERQETIIAAAREMLNS.

As to quaternary structure, interacts with mdt-6 and mdt-30. In terms of tissue distribution, ubiquitously expressed in tissues including epidermal, intestinal, pharyngeal and uterine, and is also expressed in vulval muscle cells and gut granules.

It localises to the nucleus. The protein resides in the cytoplasm. Plays a role in normal growth and development. The protein is Coiled-coil domain-containing protein mdt-28 of Caenorhabditis elegans.